A 1031-amino-acid chain; its full sequence is Error-prone DNA polymerase (1031 aa).

Belongs to the DNA polymerase type-C family. DnaE2 subfamily.

The protein localises to the cytoplasm. It carries out the reaction DNA(n) + a 2'-deoxyribonucleoside 5'-triphosphate = DNA(n+1) + diphosphate. DNA polymerase involved in damage-induced mutagenesis and translesion synthesis (TLS). It is not the major replicative DNA polymerase. This Pseudomonas aeruginosa (strain ATCC 15692 / DSM 22644 / CIP 104116 / JCM 14847 / LMG 12228 / 1C / PRS 101 / PAO1) protein is Error-prone DNA polymerase.